We begin with the raw amino-acid sequence, 225 residues long: Cytidylate kinase (225 aa).

Residue 12 to 20 (GPSGAGKGT) coordinates ATP.

Belongs to the cytidylate kinase family. Type 1 subfamily.

It is found in the cytoplasm. It carries out the reaction CMP + ATP = CDP + ADP. The enzyme catalyses dCMP + ATP = dCDP + ADP. The protein is Cytidylate kinase of Edwardsiella ictaluri (strain 93-146).